Here is a 535-residue protein sequence, read N- to C-terminus: CTP synthase (535 aa).

The region spanning 300–535 (RIGIVGKYAP…LVSASYERSK (236 aa)) is the Glutamine amidotransferase type-1 domain. Catalysis depends on for GATase activity residues Cys385, His509, and Glu511.

It belongs to the CTP synthase family.

The catalysed reaction is UTP + L-glutamine + ATP + H2O = CTP + L-glutamate + ADP + phosphate + 2 H(+). Its pathway is pyrimidine metabolism; CTP biosynthesis via de novo pathway; CTP from UDP: step 2/2. Its function is as follows. Catalyzes the ATP-dependent amination of UTP to CTP with either L-glutamine or ammonia as the source of nitrogen. The protein is CTP synthase of Encephalitozoon cuniculi (strain GB-M1) (Microsporidian parasite).